Here is a 104-residue protein sequence, read N- to C-terminus: N(4)-acetylcytidine amidohydrolase (104 aa).

Positions 7–93 constitute an ASCH domain; it reads MTFFSRFEAD…EVIQEIYPGI (87 aa). Lysine 22 serves as the catalytic Proton acceptor. Threonine 25 functions as the Nucleophile in the catalytic mechanism. The active-site Proton donor is glutamate 75.

Belongs to the N(4)-acetylcytidine amidohydrolase family.

It catalyses the reaction N(4)-acetylcytidine + H2O = cytidine + acetate + H(+). It carries out the reaction N(4)-acetyl-2'-deoxycytidine + H2O = 2'-deoxycytidine + acetate + H(+). The enzyme catalyses N(4)-acetylcytosine + H2O = cytosine + acetate + H(+). Catalyzes the hydrolysis of N(4)-acetylcytidine (ac4C). This Vibrio vulnificus (strain YJ016) protein is N(4)-acetylcytidine amidohydrolase.